The sequence spans 167 residues: Phospholipase A and acyltransferase 1 (167 aa).

At 1 to 138 the chain is on the cytoplasmic side; that stretch reads MAVNDCFSLT…GEGVSEQANR (138 aa). Residues 20–135 enclose the LRAT domain; that stretch reads LIEVFRPCYQ…LRYGEGVSEQ (116 aa). Residue H30 is part of the active site. The Acyl-thioester intermediate role is filled by C119. A helical membrane pass occupies residues 139 to 159; that stretch reads AIGTIGLVAAGIDIFTFLGLF. Residues 160 to 167 lie on the Lumenal side of the membrane; that stretch reads PKRQRTKY.

The protein belongs to the H-rev107 family. In terms of tissue distribution, expressed in skeletal muscle, heart, brain, bone marrow and testis. As to expression, abundantly expressed in brain, heart, and skeletal muscle.

It localises to the membrane. Its subcellular location is the cytoplasm. The protein resides in the nucleus. It catalyses the reaction a 1,2-diacyl-sn-glycero-3-phosphocholine + H2O = a 1-acyl-sn-glycero-3-phosphocholine + a fatty acid + H(+). The catalysed reaction is a 1,2-diacyl-sn-glycero-3-phosphocholine + H2O = a 2-acyl-sn-glycero-3-phosphocholine + a fatty acid + H(+). It carries out the reaction 1,2-dihexadecanoyl-sn-glycero-3-phosphocholine + H2O = 2-hexadecanoyl-sn-glycero-3-phosphocholine + hexadecanoate + H(+). The enzyme catalyses 1,2-dihexadecanoyl-sn-glycero-3-phosphocholine + H2O = 1-hexadecanoyl-sn-glycero-3-phosphocholine + hexadecanoate + H(+). It catalyses the reaction 1-hexadecanoyl-2-(5Z,8Z,11Z,14Z-eicosatetraenoyl)-sn-glycero-3-phosphoethanolamine + H2O = 2-(5Z,8Z,11Z,14Z)-eicosatetraenoyl-sn-glycero-3-phosphoethanolamine + hexadecanoate + H(+). The catalysed reaction is 1-hexadecanoyl-2-(5Z,8Z,11Z,14Z-eicosatetraenoyl)-sn-glycero-3-phosphoethanolamine + H2O = 1-hexadecanoyl-sn-glycero-3-phosphoethanolamine + (5Z,8Z,11Z,14Z)-eicosatetraenoate + H(+). It carries out the reaction 1,2-di-(9Z-octadecenoyl)-sn-glycero-3-phosphoethanolamine + 1,2-dihexadecanoyl-sn-glycero-3-phosphocholine = hexadecanoyl-sn-glycero-3-phosphocholine + N-hexadecanoyl-1,2-di-(9Z-octadecenoyl)-sn-glycero-3-phosphoethanolamine + H(+). The enzyme catalyses 1,2-dihexadecanoyl-sn-glycero-3-phosphocholine + a 2-acyl-sn-glycero-3-phosphocholine = a 1-hexadecanoyl-2-acyl-sn-glycero-3-phosphocholine + 2-hexadecanoyl-sn-glycero-3-phosphocholine. Functionally, exhibits both phospholipase A1/2 and acyltransferase activities. Shows phospholipase A1 (PLA1) and A2 (PLA2) activity, catalyzing the calcium-independent release of fatty acids from the sn-1 or sn-2 position of glycerophospholipids. Shows O-acyltransferase activity, catalyzing the transfer of a fatty acyl group from glycerophospholipid to the hydroxyl group of lysophospholipid. Shows N-acyltransferase activity, catalyzing the calcium-independent transfer of a fatty acyl group at the sn-1 position of phosphatidylcholine (PC) and other glycerophospholipids to the primary amine of phosphatidylethanolamine (PE), forming N-acylphosphatidylethanolamine (NAPE), which serves as precursor for N-acylethanolamines (NAEs). The protein is Phospholipase A and acyltransferase 1 of Mus musculus (Mouse).